Reading from the N-terminus, the 324-residue chain is Beta-ketoacyl-[acyl-carrier-protein] synthase III (324 aa).

Residues Cys112 and His249 contribute to the active site. The segment at 250-254 is ACP-binding; that stretch reads QANRR. The active site involves Asn279.

Belongs to the thiolase-like superfamily. FabH family. Homodimer.

The protein localises to the cytoplasm. The catalysed reaction is malonyl-[ACP] + acetyl-CoA + H(+) = 3-oxobutanoyl-[ACP] + CO2 + CoA. It participates in lipid metabolism; fatty acid biosynthesis. Catalyzes the condensation reaction of fatty acid synthesis by the addition to an acyl acceptor of two carbons from malonyl-ACP. Catalyzes the first condensation reaction which initiates fatty acid synthesis and may therefore play a role in governing the total rate of fatty acid production. Possesses both acetoacetyl-ACP synthase and acetyl transacylase activities. Its substrate specificity determines the biosynthesis of branched-chain and/or straight-chain of fatty acids. The protein is Beta-ketoacyl-[acyl-carrier-protein] synthase III of Streptococcus pyogenes serotype M4 (strain MGAS10750).